Here is a 457-residue protein sequence, read N- to C-terminus: Siroheme synthase (457 aa).

Residues 1–204 (MDHLPIFCQL…QDQQAVEETT (204 aa)) are precorrin-2 dehydrogenase /sirohydrochlorin ferrochelatase. NAD(+)-binding positions include 22 to 23 (DV) and 43 to 44 (LA). The residue at position 128 (Ser-128) is a Phosphoserine. Residues 216 to 457 (GEVVLVGAGP…REKLNWFSNH (242 aa)) are uroporphyrinogen-III C-methyltransferase. Position 225 (Pro-225) interacts with S-adenosyl-L-methionine. Asp-248 (proton acceptor) is an active-site residue. Residue Lys-270 is the Proton donor of the active site. Residues 301–303 (GGD), Ile-306, 331–332 (TA), Met-382, and Gly-411 contribute to the S-adenosyl-L-methionine site.

In the N-terminal section; belongs to the precorrin-2 dehydrogenase / sirohydrochlorin ferrochelatase family. This sequence in the C-terminal section; belongs to the precorrin methyltransferase family.

It catalyses the reaction uroporphyrinogen III + 2 S-adenosyl-L-methionine = precorrin-2 + 2 S-adenosyl-L-homocysteine + H(+). It carries out the reaction precorrin-2 + NAD(+) = sirohydrochlorin + NADH + 2 H(+). The enzyme catalyses siroheme + 2 H(+) = sirohydrochlorin + Fe(2+). It participates in cofactor biosynthesis; adenosylcobalamin biosynthesis; precorrin-2 from uroporphyrinogen III: step 1/1. Its pathway is cofactor biosynthesis; adenosylcobalamin biosynthesis; sirohydrochlorin from precorrin-2: step 1/1. It functions in the pathway porphyrin-containing compound metabolism; siroheme biosynthesis; precorrin-2 from uroporphyrinogen III: step 1/1. The protein operates within porphyrin-containing compound metabolism; siroheme biosynthesis; siroheme from sirohydrochlorin: step 1/1. It participates in porphyrin-containing compound metabolism; siroheme biosynthesis; sirohydrochlorin from precorrin-2: step 1/1. In terms of biological role, multifunctional enzyme that catalyzes the SAM-dependent methylations of uroporphyrinogen III at position C-2 and C-7 to form precorrin-2 via precorrin-1. Then it catalyzes the NAD-dependent ring dehydrogenation of precorrin-2 to yield sirohydrochlorin. Finally, it catalyzes the ferrochelation of sirohydrochlorin to yield siroheme. This is Siroheme synthase from Enterobacter sp. (strain 638).